An 846-amino-acid polypeptide reads, in one-letter code: MSESGFSQRFNPHVVDGRWQKKWEESGCFHAKDNSDRPHSYILEMFPYPSGRIHMGHVRNYTMGDVLARYYRMKGHEVLHPMGWDAFGMPAENAAMERKIHPREWTMSNIATMREQLKRIGFAIDWSRELATCEPSYYGQEQALFLDLYKAGLVYRKESAVNWDPIDNTVLANEQVIDGRGWRSGALVERKKLNQWFLKITEFADDLLDGLKDLDQWPEKVRSMQENWIGRSQGMQFHFNFEVAPEGFDKIEVFTTRPDTLFGASFVAIACDHPIAKALAEKNAALPEFIADCQKMGTAAEDIETAEKKGFDTGLSLVHPLNPELKLPLFVANFVLMDYGTGAVFGCPAHDQRDLDFALKYNLPVKRVVAPSEAESNEAIGDKADTRAGIMVNSSFLDGLSSEEAKKTVIARAEKEGWGKGTTVFRLRDWGVSRQRYWGTPIPIIHCDSCGAVPVPKDQLPVTLPDDINFDKPGNPLERHPTWKNVTCPKCGKPARRETDTLDTFVDSSWYFIRFASQPDDKPFDKATAEKWLPVGQYIGGVEHAILHLLYARFWTRALQSIGRLDIKEPFTGLFTQGMVTHETYKDPEGHWLSPEQIHKDEAGIFLTESGEKVTVGRVEKMSKSKKNVVEPAPILDQYGADAVRWFMLSDSPPERDLAWTEAGIEGCWRFMQRLWRVAAIASEEASAGIDKDLQHRLHCSIKEVGEAIEGLSFNKAIAKIHDLVNAIEKAKASATRKEAALTLFRLVAPMVPHLSEEAWHLLEKEGFVAEASWPEFDPALTVEDEITIAVQVNGKLRDTLTVARDMPKDEAEKLALASEKVIKMLEGRSPKKVIVVPNRLVNIVA.

The short motif at 47-57 (PYPSGRIHMGH) is the 'HIGH' region element. The 'KMSKS' region motif lies at 621–625 (KMSKS). Lysine 624 serves as a coordination point for ATP.

The protein belongs to the class-I aminoacyl-tRNA synthetase family.

It localises to the cytoplasm. The enzyme catalyses tRNA(Leu) + L-leucine + ATP = L-leucyl-tRNA(Leu) + AMP + diphosphate. This Zymomonas mobilis subsp. mobilis (strain ATCC 31821 / ZM4 / CP4) protein is Leucine--tRNA ligase.